Reading from the N-terminus, the 249-residue chain is MTIKPIYQRILLKLSGEALQGKNNFGIDTNALNRIVQEIKELIKFKINIGIVIGGGNLFRGTLLAHLGIQRVVCDHMGMLATVINSLAIRNTMLHININANILSAIPLDGICELYNLDKAIDLLEKNIVVIFAAGIGNPFFTTDSAACLRGLEIGADVVLKATKVDGVFSADPKIDPDAILYDQLNYKDILKQELKIMDLTALTLAHDNHLPIRVFNINKPGALWRVVMGKKEGTLIYTPKINKVNYNI.

13–16 (KLSG) contributes to the ATP binding site. A UMP-binding site is contributed by G55. Residues G56 and R60 each contribute to the ATP site. Residues D75 and 136–143 (IGNPFFTT) contribute to the UMP site. ATP-binding residues include T163, F169, and D172.

It belongs to the UMP kinase family. In terms of assembly, homohexamer.

Its subcellular location is the cytoplasm. It carries out the reaction UMP + ATP = UDP + ADP. Its pathway is pyrimidine metabolism; CTP biosynthesis via de novo pathway; UDP from UMP (UMPK route): step 1/1. Its activity is regulated as follows. Inhibited by UTP. Functionally, catalyzes the reversible phosphorylation of UMP to UDP. The chain is Uridylate kinase from Baumannia cicadellinicola subsp. Homalodisca coagulata.